An 80-amino-acid polypeptide reads, in one-letter code: Moroidotoxin A (80 aa).

Positions 1 to 27 are cleaved as a signal peptide; the sequence is MAAVKKHLRFALVAAITIALLVAGSVA. Residues 28–44 constitute a propeptide that is removed on maturation; it reads DESSEDIDNIVIKTPLD. Intrachain disulfides connect Cys48–Cys65, Cys53–Cys67, and Cys61–Cys76.

Belongs to the gympietide family. Expressed in trichomes, that are stiff epidermal hairs located on the surface of petioles and leaves. Not expressed in other aerial parts.

The protein resides in the secreted. In terms of biological role, neurotoxin certainly responsible for the defensive, persistent, and painful stings of the giant stinging tree. Inhibits inactivation of Nav1.7/SCN9A sodium channel in sensory neurons by directly interacting with TMEM233, a newly described Nav-interacting protein. Has virtually no effect on Nav1.7/SCN9A function in heterologous expression systems and in neurons that do not express TMEM233. Also weakly but significantly affects Nav1.8/SCN10A. Coexpression of TMEM233 with Nav also confers ExTxA sensitivity to Nav1.1-Nav1.6. On the Nav1.7/SCN9A channel, causes a significant hyperpolarizing shift in the voltage dependence of activation. Its effects on Nav currents are irreversible, with no apparent reduction in activity even after repeated wash steps over 30 minutes. In vivo, induces nocifensive behavior in mice (licking or biting and shaking or lifting of the affected paw) lasting for approximately 1 hour. The protein is Moroidotoxin A of Dendrocnide moroides (Gympie stinging tree).